The primary structure comprises 148 residues: MKVVIQRVSQAQVAIEEQIVGQIKQGFMVLVGIHQEDTPEDVAYVVGKISKLRVFEDDEGKMNRSIQEIEGSILSISQFTLYAKTKKGNRPSFIEAARPDVAIPLYELFNQQLEAEGIAVATGEFGADMQVSLTNDGPVTIVIDTREK.

Positions 137 to 138 (GP) match the Gly-cisPro motif, important for rejection of L-amino acids motif.

This sequence belongs to the DTD family. As to quaternary structure, homodimer.

The protein resides in the cytoplasm. The catalysed reaction is glycyl-tRNA(Ala) + H2O = tRNA(Ala) + glycine + H(+). It carries out the reaction a D-aminoacyl-tRNA + H2O = a tRNA + a D-alpha-amino acid + H(+). An aminoacyl-tRNA editing enzyme that deacylates mischarged D-aminoacyl-tRNAs. Also deacylates mischarged glycyl-tRNA(Ala), protecting cells against glycine mischarging by AlaRS. Acts via tRNA-based rather than protein-based catalysis; rejects L-amino acids rather than detecting D-amino acids in the active site. By recycling D-aminoacyl-tRNA to D-amino acids and free tRNA molecules, this enzyme counteracts the toxicity associated with the formation of D-aminoacyl-tRNA entities in vivo and helps enforce protein L-homochirality. In Enterococcus faecalis (strain ATCC 700802 / V583), this protein is D-aminoacyl-tRNA deacylase.